The primary structure comprises 442 residues: Thymidine phosphorylase (442 aa).

Belongs to the thymidine/pyrimidine-nucleoside phosphorylase family. In terms of assembly, homodimer.

The enzyme catalyses thymidine + phosphate = 2-deoxy-alpha-D-ribose 1-phosphate + thymine. It functions in the pathway pyrimidine metabolism; dTMP biosynthesis via salvage pathway; dTMP from thymine: step 1/2. The enzymes which catalyze the reversible phosphorolysis of pyrimidine nucleosides are involved in the degradation of these compounds and in their utilization as carbon and energy sources, or in the rescue of pyrimidine bases for nucleotide synthesis. This chain is Thymidine phosphorylase, found in Vibrio vulnificus (strain CMCP6).